A 440-amino-acid chain; its full sequence is NADH-quinone oxidoreductase subunit H (440 aa).

The next 9 membrane-spanning stretches (helical) occupy residues 11–31, 83–103, 123–143, 164–184, 207–227, 261–281, 299–319, 331–351, and 366–386; these read VWLIIVKVVILFVILLAWTIF, IVFNLAPVIAGIACFASWSVI, VPVAVLFILAVASIGIYGVVL, MISYEVAMGLSLVTVFIFSGS, IAGHYWLLLIPSFVIYVITMF, FLAEYINMATLSAVCTTLFLG, WWGLLWFFLKTQLVIFFFVWV, FMDLGWKVLIPVSLGWVLLVA, and VFLVVVGVILVALIVWAFMGG.

The protein belongs to the complex I subunit 1 family. In terms of assembly, NDH-1 is composed of 14 different subunits. Subunits NuoA, H, J, K, L, M, N constitute the membrane sector of the complex.

Its subcellular location is the cell membrane. It carries out the reaction a quinone + NADH + 5 H(+)(in) = a quinol + NAD(+) + 4 H(+)(out). Its function is as follows. NDH-1 shuttles electrons from NADH, via FMN and iron-sulfur (Fe-S) centers, to quinones in the respiratory chain. The immediate electron acceptor for the enzyme in this species is believed to be ubiquinone. Couples the redox reaction to proton translocation (for every two electrons transferred, four hydrogen ions are translocated across the cytoplasmic membrane), and thus conserves the redox energy in a proton gradient. This subunit may bind ubiquinone. This chain is NADH-quinone oxidoreductase subunit H, found in Cutibacterium acnes (strain DSM 16379 / KPA171202) (Propionibacterium acnes).